The sequence spans 501 residues: Cobyric acid synthase (501 aa).

The region spanning 251–446 (NIDIAIIRLS…LHGIFDSEEF (196 aa)) is the GATase cobBQ-type domain. C332 serves as the catalytic Nucleophile. H438 is an active-site residue.

It belongs to the CobB/CobQ family. CobQ subfamily.

Its pathway is cofactor biosynthesis; adenosylcobalamin biosynthesis. Catalyzes amidations at positions B, D, E, and G on adenosylcobyrinic A,C-diamide. NH(2) groups are provided by glutamine, and one molecule of ATP is hydrogenolyzed for each amidation. This Clostridium botulinum (strain Alaska E43 / Type E3) protein is Cobyric acid synthase.